The following is a 293-amino-acid chain: Aquaporin-6 (293 aa).

Residues 1 to 22 lie on the Cytoplasmic side of the membrane; it reads MEPGLCSRAYLLVGGLWTAISK. A helical membrane pass occupies residues 23 to 43; it reads ALFAEFLATGLYVFFGVGSVL. The Extracellular portion of the chain corresponds to 44–51; it reads PWPVALPS. The helical transmembrane segment at 52 to 70 threads the bilayer; sequence VLQIAITFNLATATAVQIS. Topologically, residues 71–75 are cytoplasmic; the sequence is WKTSG. The discontinuously helical intramembrane region spans 76 to 85; that stretch reads AHANPAVTLA. The NPA 1 signature appears at 79–81; the sequence is NPA. The Cytoplasmic segment spans residues 86–96; sequence YLVGSHISLPR. A helical transmembrane segment spans residues 97–118; that stretch reads AMAYIAAQLAGATAGAALLYGV. Residues 119 to 138 are Extracellular-facing; that stretch reads TPGGIRETLGVNVVHNSTST. N-linked (GlcNAc...) asparagine glycosylation is present at Asn-134. The helical transmembrane segment at 139–159 threads the bilayer; it reads GQAVAVELVLTLQLVLCVFAS. At 160–165 the chain is on the cytoplasmic side; sequence MDGRQT. Residues 166–185 traverse the membrane as a helical segment; sequence LASPAAMIGTSVALGHLIGI. The Extracellular segment spans residues 186–189; the sequence is YFTG. The discontinuously helical intramembrane region spans 190 to 202; sequence CSMNPARSFGPAV. Residues 193–195 carry the NPA 2 motif; it reads NPA. Over 203 to 210 the chain is Extracellular; the sequence is IVGKFAVH. A helical membrane pass occupies residues 211 to 231; it reads WIFWVGPLTGAVLASLIYNFI. The Cytoplasmic segment spans residues 232 to 293; the sequence is LFPDTKTVAQ…RSFSFTLGLC (62 aa).

It belongs to the MIP/aquaporin (TC 1.A.8) family. Homotetramer; each monomer provides an independent solute pore.

The protein resides in the cytoplasmic vesicle membrane. It catalyses the reaction nitrate(in) = nitrate(out). The enzyme catalyses iodide(out) = iodide(in). It carries out the reaction bromide(in) = bromide(out). The catalysed reaction is chloride(in) = chloride(out). It catalyses the reaction Na(+)(in) = Na(+)(out). The enzyme catalyses H2O(in) = H2O(out). It carries out the reaction CO2(out) = CO2(in). The catalysed reaction is NH4(+)(in) = NH4(+)(out). Its function is as follows. Aquaporins form homotetrameric transmembrane channels, with each monomer independently mediating water transport across the plasma membrane along its osmotic gradient. Unlike classical aquaporins, AQP6 is an intracellular channel with selective anion permeability, particularly for nitrate, and exhibits very low water permeability. It may also facilitate the transport of gases, such as CO2 and NH4(+), as demonstrated in vitro. The protein is Aquaporin-6 of Mus musculus (Mouse).